The sequence spans 403 residues: Argininosuccinate synthase (403 aa).

ATP is bound by residues 13–21 and A40; that span reads AYSGGLDTS. Residues Y91 and S96 each coordinate L-citrulline. G121 serves as a coordination point for ATP. 3 residues coordinate L-aspartate: T123, N127, and D128. Residue N127 participates in L-citrulline binding. L-citrulline-binding residues include R131, S180, S189, E265, and Y277.

Belongs to the argininosuccinate synthase family. Type 1 subfamily. In terms of assembly, homotetramer.

It localises to the cytoplasm. It catalyses the reaction L-citrulline + L-aspartate + ATP = 2-(N(omega)-L-arginino)succinate + AMP + diphosphate + H(+). Its pathway is amino-acid biosynthesis; L-arginine biosynthesis; L-arginine from L-ornithine and carbamoyl phosphate: step 2/3. This chain is Argininosuccinate synthase, found in Leptospira interrogans serogroup Icterohaemorrhagiae serovar Lai (strain 56601).